Reading from the N-terminus, the 324-residue chain is NAD(P)H-dependent D-xylose reductase XYR1 (324 aa).

Tyr50 (proton donor) is an active-site residue. Position 112 (His112) interacts with substrate. Residues 168-169, 217-226, and 273-283 each bind NAD(+); these read SN, SSFGPASFKE, and KSSREKTMKSN.

The protein belongs to the aldo/keto reductase family.

The catalysed reaction is xylitol + NAD(+) = D-xylose + NADH + H(+). The enzyme catalyses xylitol + NADP(+) = D-xylose + NADPH + H(+). It participates in carbohydrate metabolism; D-xylose degradation. Catalyzes the initial reaction in the xylose utilization pathway by reducing D-xylose into xylitol. Xylose is a major component of hemicelluloses such as xylan. Most fungi utilize D-xylose via three enzymatic reactions, xylose reductase (XR), xylitol dehydrogenase (XDH), and xylulokinase, to form xylulose 5-phosphate, which enters pentose phosphate pathway. This Pyricularia oryzae (strain 70-15 / ATCC MYA-4617 / FGSC 8958) (Rice blast fungus) protein is NAD(P)H-dependent D-xylose reductase XYR1 (XYR1).